We begin with the raw amino-acid sequence, 1120 residues long: ELKS/Rab6-interacting/CAST family member 1 (1120 aa).

Residues 1-54 (MYGSARSVGKVEPSSQSPGRSPRLPRSPRLGHRRTNSTGGSSGNSVGGGSGKTL) are disordered. Residue Lys10 is modified to N6-acetyllysine. The span at 13 to 28 (PSSQSPGRSPRLPRSP) shows a compositional bias: low complexity. Phosphoserine occurs at positions 17, 21, and 37. Phosphothreonine is present on Thr38. Gly residues predominate over residues 40–51 (GSSGNSVGGGSG). Residues Ser55, Ser75, Ser94, Ser824, Leu965, and Ser1009 each carry the phosphoserine modification. Positions 144-992 (RQARDNTIMD…RMKLMADNYE (849 aa)) form a coiled coil. Basic and acidic residues predominate over residues 801 to 824 (KHKEQVEKKKSAQMLEEARRREDS). The disordered stretch occupies residues 801–840 (KHKEQVEKKKSAQMLEEARRREDSLSDSSQQLQDSLRKKD). Thr1050 bears the Phosphothreonine mark. The FIP-RBD domain maps to 1050 to 1112 (TPPASYNADG…DHCPDILEQV (63 aa)). Residues 1060-1104 (EQAAWENELQQMTQEQLQNELEKVEGDNAELQEFANTILQQIADH) are a coiled coil.

Interacts with the GTB-bound forms of RAB6A isoform 1 and isoform 2 and with RAB6B. The interaction was strongest with RAB6B, followed by RAB6A isoform 2 and weakest with RAB6A isoform 1. Part of a complex with CHUK, IKBKB and IKBKG. Interacts with CHUK, IKBKB and IKBKG. The interaction with IKBKG is independent of CHUK and IKBKB. Interacts with NFKBIA. Isoform 2 interacts through its C-terminus with the PDZ domains of RIMS1 and RIMS2. Interacts with ERC2/CAST1. Interacts with SDCCAG8. Part of a cortical microtubule stabilization complex (CMSC) composed of KANK1, PPFIA1, PPFIBP1, ERC1/ELKS, PHLDB2/LL5beta, CLASPs, KIF21A and possibly additional interactors; within CMSCs KANK1 and PHLDB2/LL5beta appear to be the core components for targeting of microtubule-binding proteins KIF21A and CLASPs, whereas PPFIA1, PPFIBP1 and ERC1/ELKS serve as scaffolds for protein clustering. As to expression, widely expressed.

The protein localises to the cytoplasm. It localises to the cytoskeleton. The protein resides in the microtubule organizing center. Its subcellular location is the centrosome. It is found in the membrane. The protein localises to the golgi apparatus membrane. It localises to the presynaptic active zone. The protein resides in the cell projection. Its subcellular location is the podosome. In terms of biological role, regulatory subunit of the IKK complex. Probably recruits IkappaBalpha/NFKBIA to the complex. May be involved in the organization of the cytomatrix at the nerve terminals active zone (CAZ) which regulates neurotransmitter release. May be involved in vesicle trafficking at the CAZ. May be involved in Rab-6 regulated endosomes to Golgi transport. This Mus musculus (Mouse) protein is ELKS/Rab6-interacting/CAST family member 1.